The primary structure comprises 417 residues: MAP kinase-interacting serine/threonine-protein kinase 1 (417 aa).

Residues 1–20 (MVSSQPVPIDDGGKRRKKKR) form a disordered region. A Protein kinase domain is found at 37–321 (RLTDELLGEG…AAQVLQHPWL (285 aa)). Residues 43-51 (LGEGAYAKV) and Lys66 contribute to the ATP site. Asp158 acts as the Proton acceptor in catalysis. The interval 397–417 (AHARKGGSHLTHTTVTSQGAT) is disordered. Polar residues predominate over residues 406-417 (LTHTTVTSQGAT).

Belongs to the protein kinase superfamily. CAMK Ser/Thr protein kinase family. Requires Mg(2+) as cofactor.

The enzyme catalyses L-seryl-[protein] + ATP = O-phospho-L-seryl-[protein] + ADP + H(+). It catalyses the reaction L-threonyl-[protein] + ATP = O-phospho-L-threonyl-[protein] + ADP + H(+). In terms of biological role, may play a role in the response to environmental stress and cytokines. Appears to regulate translation by phosphorylating EIF4E, thus increasing the affinity of this protein for the 7-methylguanosine-containing mRNA cap. The chain is MAP kinase-interacting serine/threonine-protein kinase 1 (mknk1) from Xenopus tropicalis (Western clawed frog).